Consider the following 320-residue polypeptide: Dual oxidase maturation factor 2 (320 aa).

Residues 1–21 (MTLWNGVLPFYPQPRHAAGFS) are Extracellular-facing. Residues 22–42 (VPLLIVILVFLALAASFLLIL) traverse the membrane as a helical segment. At 43–56 (PGIRGHSRWFWLVR) the chain is on the cytoplasmic side. The helical transmembrane segment at 57–77 (VLLSLFIGAEIVAVHFSAEWF) threads the bilayer. The Extracellular portion of the chain corresponds to 78 to 183 (VGTVNTNTSY…HLAGHYASAT (106 aa)). N-linked (GlcNAc...) asparagine glycosylation is found at asparagine 84, asparagine 109, and asparagine 121. A helical transmembrane segment spans residues 184–204 (LWVAFCFWLLSNVLLSTPAPL). Topologically, residues 205 to 206 (YG) are cytoplasmic. Residues 207–227 (GLALLTTGAFALFGVFALASI) traverse the membrane as a helical segment. Residues 228 to 247 (SSVPLCPLRLGSSALTTQYG) lie on the Extracellular side of the membrane. A helical transmembrane segment spans residues 248–268 (AAFWVTLATGVLCLFLGGAVV). Topologically, residues 269-320 (SLQYVRPSALRTLLDQSAKDCSQERGGSPLILGDPLHKQAALPDLKCITTNL) are cytoplasmic.

This sequence belongs to the DUOXA family. Heterodimer with DUXA2; disulfide-linked. Interacts with CSNK1G2. Post-translationally, N-glycosylated. In terms of tissue distribution, specifically expressed in thyroid. Also detected in salivary glands.

Its subcellular location is the endoplasmic reticulum membrane. Functionally, required for the maturation and the transport from the endoplasmic reticulum to the plasma membrane of functional DUOX2. May play a role in thyroid hormone synthesis. The chain is Dual oxidase maturation factor 2 (DUOXA2) from Homo sapiens (Human).